A 632-amino-acid polypeptide reads, in one-letter code: tRNA-guanine(15) transglycosylase (632 aa).

D86 (nucleophile) is an active-site residue. Positions 121 and 186 each coordinate substrate. The PUA domain maps to 553-628 (AMRVTVSKES…IAVKVHEGRD (76 aa)).

It belongs to the archaeosine tRNA-ribosyltransferase family. It depends on Zn(2+) as a cofactor.

The catalysed reaction is guanosine(15) in tRNA + 7-cyano-7-deazaguanine = 7-cyano-7-carbaguanosine(15) in tRNA + guanine. The protein operates within tRNA modification; archaeosine-tRNA biosynthesis. In terms of biological role, exchanges the guanine residue with 7-cyano-7-deazaguanine (preQ0) at position 15 in the dihydrouridine loop (D-loop) of archaeal tRNAs. The sequence is that of tRNA-guanine(15) transglycosylase from Thermoplasma acidophilum (strain ATCC 25905 / DSM 1728 / JCM 9062 / NBRC 15155 / AMRC-C165).